Reading from the N-terminus, the 535-residue chain is CTP synthase (535 aa).

Residues M1 to L267 form an amidoligase domain region. CTP is bound at residue S13. S13 is a UTP binding site. ATP is bound at residue S14–I19. Y54 contacts L-glutamine. An ATP-binding site is contributed by D71. Positions 71 and 141 each coordinate Mg(2+). CTP is bound by residues D148–E150, K188–Q193, and K224. UTP contacts are provided by residues K188 to Q193 and K224. Positions T292–K534 constitute a Glutamine amidotransferase type-1 domain. An L-glutamine-binding site is contributed by G354. Residue C381 is the Nucleophile; for glutamine hydrolysis of the active site. L-glutamine contacts are provided by residues L382–Q385, E405, and R462. Active-site residues include H507 and E509.

It belongs to the CTP synthase family. In terms of assembly, homotetramer.

It carries out the reaction UTP + L-glutamine + ATP + H2O = CTP + L-glutamate + ADP + phosphate + 2 H(+). The catalysed reaction is L-glutamine + H2O = L-glutamate + NH4(+). It catalyses the reaction UTP + NH4(+) + ATP = CTP + ADP + phosphate + 2 H(+). Its pathway is pyrimidine metabolism; CTP biosynthesis via de novo pathway; CTP from UDP: step 2/2. Allosterically activated by GTP, when glutamine is the substrate; GTP has no effect on the reaction when ammonia is the substrate. The allosteric effector GTP functions by stabilizing the protein conformation that binds the tetrahedral intermediate(s) formed during glutamine hydrolysis. Inhibited by the product CTP, via allosteric rather than competitive inhibition. Functionally, catalyzes the ATP-dependent amination of UTP to CTP with either L-glutamine or ammonia as the source of nitrogen. Regulates intracellular CTP levels through interactions with the four ribonucleotide triphosphates. This Bacillus licheniformis (strain ATCC 14580 / DSM 13 / JCM 2505 / CCUG 7422 / NBRC 12200 / NCIMB 9375 / NCTC 10341 / NRRL NRS-1264 / Gibson 46) protein is CTP synthase.